We begin with the raw amino-acid sequence, 50 residues long: Fungus-induced-related protein 15 (50 aa).

An N-terminal signal peptide occupies residues 1–21; it reads MNFYSLFVFIALIFSFNVVHG.

Functionally, may have role in hypoxia response. The chain is Fungus-induced-related protein 15 (fipr-15) from Caenorhabditis elegans.